A 123-amino-acid polypeptide reads, in one-letter code: Diacylglycerol kinase (123 aa).

A helical membrane pass occupies residues 15–32 (ILNATGYSLAGFLAAFRG). Glu33 lines the a divalent metal cation pocket. The next 3 helical transmembrane spans lie at 35-55 (AFRQ…LLDV), 61-81 (ALMI…SAIE), and 102-122 (GSAA…TILL). Catalysis depends on Glu74, which acts as the Proton acceptor. Residue Glu81 coordinates a divalent metal cation.

The protein belongs to the bacterial diacylglycerol kinase family. Mg(2+) is required as a cofactor.

The protein resides in the cell inner membrane. It catalyses the reaction a 1,2-diacyl-sn-glycerol + ATP = a 1,2-diacyl-sn-glycero-3-phosphate + ADP + H(+). Catalyzes the ATP-dependent phosphorylation of sn-l,2-diacylglycerol (DAG) to phosphatidic acid. Involved in the recycling of diacylglycerol produced as a by-product during membrane-derived oligosaccharide (MDO) biosynthesis. In Pseudomonas aeruginosa (strain ATCC 15692 / DSM 22644 / CIP 104116 / JCM 14847 / LMG 12228 / 1C / PRS 101 / PAO1), this protein is Diacylglycerol kinase (dgkA).